The sequence spans 551 residues: 2-(3-amino-3-carboxypropyl)histidine synthase subunit 2 (551 aa).

Residues Cys116, Cys137, and Cys371 each coordinate [4Fe-4S] cluster.

Belongs to the DPH1/DPH2 family. DPH2 subfamily. Component of the 2-(3-amino-3-carboxypropyl)histidine synthase complex composed of DPH1, DPH2, DPH3 and a NADH-dependent reductase, predominantly CBR1. [4Fe-4S] cluster is required as a cofactor.

It is found in the cytoplasm. Its pathway is protein modification; peptidyl-diphthamide biosynthesis. In terms of biological role, required for the first step of diphthamide biosynthesis, a post-translational modification of histidine which occurs in elongation factor 2. DPH1 and DPH2 transfer a 3-amino-3-carboxypropyl (ACP) group from S-adenosyl-L-methionine (SAM) to a histidine residue, the reaction is assisted by a reduction system comprising DPH3 and a NADH-dependent reductase, predominantly CBR1. Facilitates the reduction of the catalytic iron-sulfur cluster found in the DPH1 subunit. This Candida glabrata (strain ATCC 2001 / BCRC 20586 / JCM 3761 / NBRC 0622 / NRRL Y-65 / CBS 138) (Yeast) protein is 2-(3-amino-3-carboxypropyl)histidine synthase subunit 2 (DPH2).